The following is a 223-amino-acid chain: Voltage-dependent calcium channel gamma-1 subunit (223 aa).

The Cytoplasmic portion of the chain corresponds to 1–10 (MSQTKTLKVR). A helical membrane pass occupies residues 11 to 29 (VALLCILVGIVLALVAVVT). Over 30–109 (DHWAVLSPHV…TQKEYSISAA (80 aa)) the chain is Extracellular. Asparagine 43 and asparagine 80 each carry an N-linked (GlcNAc...) asparagine glycan. The cysteines at positions 57 and 81 are disulfide-linked. The helical transmembrane segment at 110–130 (AIAIFSLGFIIVGTLCALLSF) threads the bilayer. Residues 131–135 (RKKRD) lie on the Cytoplasmic side of the membrane. The helical transmembrane segment at 136-156 (YLLRPASMFYIFAGLCLSVSA) threads the bilayer. The Extracellular segment spans residues 157 to 180 (EVMRQSVQRMVDSEHTAWIAHSLA). Residues 181-205 (WSFICACVAAALLLVGGLALLLLAL) traverse the membrane as a helical segment. Residues 206-223 (PRMPRDPWESCMDAEPEH) are Cytoplasmic-facing.

The protein belongs to the PMP-22/EMP/MP20 family. CACNG subfamily. Component of a calcium channel complex consisting of a pore-forming alpha subunit (CACNA1S) and the ancillary subunits CACNB1 or CACNB2, CACNG1 and CACNA2D1. The channel complex contains alpha, beta, gamma and delta subunits in a 1:1:1:1 ratio, i.e. it contains either CACNB1 or CACNB2. Post-translationally, N-glycosylated.

It is found in the cell membrane. The protein localises to the sarcolemma. In terms of biological role, regulatory subunit of the voltage-gated calcium channel that gives rise to L-type calcium currents in skeletal muscle. Regulates channel inactivation kinetics. This chain is Voltage-dependent calcium channel gamma-1 subunit (CACNG1), found in Bos taurus (Bovine).